Here is a 397-residue protein sequence, read N- to C-terminus: MSNVNTLSALAKSGALSGKRVFIRADLNVPFDDAGRISEDTRIRASVPGIRLALDAGAAVMVTSHLGRPKEGALTEADSLAPVAQRLSELLGMQVRLVPDWVDGVSVEPGEVVLLENCRGNVGEKKDDEGLSRKMAALCDVYVNDAFGTAHRAEATTHGIARFAPVACAGPLLEAELDALGRALHDPKRPLVAIVGGSKVSTKLSILQSLADKVDQLVVGGGIANTFMLAAGLPIGKSLAEPEQVEQARAVIEIMKRRGAEVPIPTDVVCAKSFGADAAATVKAAADVAEDDMILDIGPQTAQRLADILKTAGTIVWNGPVGVFEFDQFAHGTEVVARAIADSAGFSIAGGGDTLAAIAKYGIADQTGYISTGGGAFLEFLEGKALPAVAVLQARAA.

Substrate contacts are provided by residues 26-28 (DLN), Arg42, 65-68 (HLGR), Arg119, and Arg152. ATP contacts are provided by residues Lys203, Glu325, and 351–354 (GGDT).

It belongs to the phosphoglycerate kinase family. As to quaternary structure, monomer.

Its subcellular location is the cytoplasm. The catalysed reaction is (2R)-3-phosphoglycerate + ATP = (2R)-3-phospho-glyceroyl phosphate + ADP. It functions in the pathway carbohydrate degradation; glycolysis; pyruvate from D-glyceraldehyde 3-phosphate: step 2/5. This Bordetella pertussis (strain Tohama I / ATCC BAA-589 / NCTC 13251) protein is Phosphoglycerate kinase.